The following is a 513-amino-acid chain: Trigger factor (513 aa).

Residues 164–249 form the PPIase FKBP-type domain; that stretch reads GDQIIIDFLG…VKAVKNAGEF (86 aa). The segment at 436–513 is disordered; the sequence is QAAIEAEEGA…KAPAKKKAEG (78 aa). Basic residues predominate over residues 452–461; the sequence is AKKAPAKKKA. Residues 489–498 show a composition bias toward low complexity; sequence ADEAPAAEEA. Residues 501–513 show a composition bias toward basic residues; sequence AKKKAPAKKKAEG.

This sequence belongs to the FKBP-type PPIase family. Tig subfamily.

It is found in the cytoplasm. The catalysed reaction is [protein]-peptidylproline (omega=180) = [protein]-peptidylproline (omega=0). Functionally, involved in protein export. Acts as a chaperone by maintaining the newly synthesized protein in an open conformation. Functions as a peptidyl-prolyl cis-trans isomerase. In Novosphingobium aromaticivorans (strain ATCC 700278 / DSM 12444 / CCUG 56034 / CIP 105152 / NBRC 16084 / F199), this protein is Trigger factor.